A 233-amino-acid chain; its full sequence is C-type lectin domain-containing protein 87 (233 aa).

An N-terminal signal peptide occupies residues 1–20; that stretch reads MRFFRFLVFPVIAGLSSVLA. N26 carries an N-linked (GlcNAc...) asparagine glycan. S32 carries an O-linked (Xyl...) (chondroitin sulfate) serine glycan. N81 is a glycosylation site (N-linked (GlcNAc...) asparagine). The 131-residue stretch at 93–223 folds into the C-type lectin domain; the sequence is FADSCYWIET…CTYLLYSICE (131 aa). Intrachain disulfides connect C114–C222 and C193–C214. N225 is a glycosylation site (N-linked (GlcNAc...) asparagine).

This chain is C-type lectin domain-containing protein 87, found in Caenorhabditis briggsae.